The following is a 630-amino-acid chain: Threonine--tRNA ligase (630 aa).

Residues 1–137 (MKVLLIHSDY…PLSELSRKIT (137 aa)) form an editing domain region. The segment at 207–506 (PHVKFITEKE…ADAGAPPMLP (300 aa)) is catalytic. Residues Cys299, His351, and His475 each contribute to the Zn(2+) site.

It belongs to the class-II aminoacyl-tRNA synthetase family. In terms of assembly, homodimer. It depends on Zn(2+) as a cofactor.

It localises to the cytoplasm. The catalysed reaction is tRNA(Thr) + L-threonine + ATP = L-threonyl-tRNA(Thr) + AMP + diphosphate + H(+). Functionally, catalyzes the attachment of threonine to tRNA(Thr) in a two-step reaction: L-threonine is first activated by ATP to form Thr-AMP and then transferred to the acceptor end of tRNA(Thr). Also edits incorrectly charged L-seryl-tRNA(Thr). This chain is Threonine--tRNA ligase, found in Methanococcus aeolicus (strain ATCC BAA-1280 / DSM 17508 / OCM 812 / Nankai-3).